The primary structure comprises 521 residues: Probable protein kinase UbiB (521 aa).

The region spanning 119–497 (SFEREPVASA…QKLTNRLLQA (379 aa)) is the Protein kinase domain. ATP contacts are provided by residues 125-133 (VASASIAQV) and lysine 151. The active-site Proton acceptor is aspartate 286. Residues 496 to 516 (QAIVSAGIGFVIALILLQLVV) form a helical membrane-spanning segment.

The protein belongs to the ABC1 family. UbiB subfamily.

It is found in the cell inner membrane. The protein operates within cofactor biosynthesis; ubiquinone biosynthesis [regulation]. Functionally, is probably a protein kinase regulator of UbiI activity which is involved in aerobic coenzyme Q (ubiquinone) biosynthesis. The sequence is that of Probable protein kinase UbiB from Delftia acidovorans (strain DSM 14801 / SPH-1).